The primary structure comprises 352 residues: Histidine protein kinase SaeS (352 aa).

2 helical membrane-spanning segments follow: residues 9 to 29 (QIIIGVISSVILTTIILVIAY) and 41 to 61 (TLAITTMITSCLTLSICSIFI). The Histidine kinase domain occupies 130–349 (NLAHDLKTPL…TMTLTLKKFQ (220 aa)). Phosphohistidine; by autocatalysis is present on H133.

Post-translationally, autophosphorylated.

It localises to the cell membrane. It carries out the reaction ATP + protein L-histidine = ADP + protein N-phospho-L-histidine.. In terms of biological role, member of the two-component regulatory system SaeR/SaeS. Probably functions as a membrane-associated protein kinase that upon sensing the appropriate signal, autophosphorylates and in turn activates the cytosolic response regulator SaeR. This Staphylococcus epidermidis (strain ATCC 35984 / DSM 28319 / BCRC 17069 / CCUG 31568 / BM 3577 / RP62A) protein is Histidine protein kinase SaeS (saeS).